The chain runs to 102 residues: uncharacterized protein (102 aa).

Residues 77 to 96 (FFSACVAKSYSSFFISICIL) form a helical membrane-spanning segment.

The protein localises to the membrane. This is an uncharacterized protein from Saccharomyces cerevisiae (strain ATCC 204508 / S288c) (Baker's yeast).